The primary structure comprises 715 residues: Polyribonucleotide nucleotidyltransferase (715 aa).

Residues Asp493 and Asp499 each coordinate Mg(2+). The 60-residue stretch at 560 to 619 (PRMITIKINPEKIRDVIGKGGSVIRALTEETGTTIDISDDGVVTIASTSSEGMAEAKKRI) folds into the KH domain. Residues 629-697 (GQVYEGTVLK…EKGRVRLSAK (69 aa)) form the S1 motif domain.

Belongs to the polyribonucleotide nucleotidyltransferase family. Requires Mg(2+) as cofactor.

It is found in the cytoplasm. The catalysed reaction is RNA(n+1) + phosphate = RNA(n) + a ribonucleoside 5'-diphosphate. Its function is as follows. Involved in mRNA degradation. Catalyzes the phosphorolysis of single-stranded polyribonucleotides processively in the 3'- to 5'-direction. In Burkholderia multivorans (strain ATCC 17616 / 249), this protein is Polyribonucleotide nucleotidyltransferase.